A 198-amino-acid chain; its full sequence is FMN-dependent NADH:quinone oxidoreductase (198 aa).

Residues Ser10, 16–18 (SQS), 94–97 (MYNF), and 138–141 (TRGG) each bind FMN.

It belongs to the azoreductase type 1 family. As to quaternary structure, homodimer. The cofactor is FMN.

It carries out the reaction 2 a quinone + NADH + H(+) = 2 a 1,4-benzosemiquinone + NAD(+). The enzyme catalyses N,N-dimethyl-1,4-phenylenediamine + anthranilate + 2 NAD(+) = 2-(4-dimethylaminophenyl)diazenylbenzoate + 2 NADH + 2 H(+). Functionally, quinone reductase that provides resistance to thiol-specific stress caused by electrophilic quinones. In terms of biological role, also exhibits azoreductase activity. Catalyzes the reductive cleavage of the azo bond in aromatic azo compounds to the corresponding amines. The chain is FMN-dependent NADH:quinone oxidoreductase from Shewanella sp. (strain ANA-3).